Here is a 557-residue protein sequence, read N- to C-terminus: Aspartate--tRNA ligase, cytoplasmic (557 aa).

Residues 1–12 (MSQDENIVKAVE) show a composition bias toward basic and acidic residues. Positions 1–74 (MSQDENIVKA…AAAEDTAKDN (74 aa)) are disordered. Residue Ser2 is modified to N-acetylserine. The residue at position 14 (Ser14) is a Phosphoserine. Residues 37–74 (LQKEQEKQRKKEERALQLEAEREAREKKAAAEDTAKDN) show a composition bias toward basic and acidic residues. Glu281 serves as a coordination point for L-aspartate. Position 301 is a phosphoserine (Ser301). An aspartate region spans residues 303 to 306 (QFNK). Arg325 serves as a coordination point for L-aspartate. Residues 325-327 (RAE), 333-335 (RHM), and Glu478 each bind ATP. Ser481 and Arg485 together coordinate L-aspartate. Residue Ser502 is modified to Phosphoserine. Position 528-531 (528-531 (GLER)) interacts with ATP. Position 546 is a phosphoserine (Ser546).

It belongs to the class-II aminoacyl-tRNA synthetase family. Type 2 subfamily. Homodimer.

It localises to the cytoplasm. The catalysed reaction is tRNA(Asp) + L-aspartate + ATP = L-aspartyl-tRNA(Asp) + AMP + diphosphate. The chain is Aspartate--tRNA ligase, cytoplasmic (DPS1) from Saccharomyces cerevisiae (strain ATCC 204508 / S288c) (Baker's yeast).